A 355-amino-acid polypeptide reads, in one-letter code: Peptide chain release factor 1 (355 aa).

Q232 is modified (N5-methylglutamine). A disordered region spans residues 282 to 309; it reads EQNASISAERKSQVGSGDRSERIRTYNY. Residues 289–305 are compositionally biased toward basic and acidic residues; it reads AERKSQVGSGDRSERIR.

It belongs to the prokaryotic/mitochondrial release factor family. Methylated by PrmC. Methylation increases the termination efficiency of RF1.

It localises to the cytoplasm. Functionally, peptide chain release factor 1 directs the termination of translation in response to the peptide chain termination codons UAG and UAA. This is Peptide chain release factor 1 from Desulfatibacillum aliphaticivorans.